The chain runs to 497 residues: Cytochrome P450 71A16 (497 aa).

The helical transmembrane segment at 1–21 (MEMMILISLCLTTFLTILLFF) threads the bilayer. Cys-439 is a heme binding site.

It belongs to the cytochrome P450 family. Heme is required as a cofactor.

It is found in the membrane. Its function is as follows. Possesses triterpene oxidizing activity. Catalyzes the C23 hydroxylation of marneral to form 23-hydroxymarneral. Catalyzes the C23 hydroxylation of marnerol to form 23-hydroxymarnerol. This is Cytochrome P450 71A16 (CYP71A16) from Arabidopsis thaliana (Mouse-ear cress).